Reading from the N-terminus, the 534-residue chain is Corneodesmosin (534 aa).

Residues 1–32 (MGLSRAPWMGRVGGRGMMALLLAGLLLPGTLA) form the signal peptide. 2 disordered regions span residues 38–252 (FSDP…HSVS) and 396–497 (CSPF…GSAG). 5 stretches are compositionally biased toward low complexity: residues 64 to 82 (GFSSYSGSSGSGSSISSAS), 107 to 185 (GYSQ…SGSA), 200 to 236 (SQLGQSSSFSQTSGQRVSSNQRPCSSDIPDSPCSGGP), 397 to 415 (SPFSSRVHSSSSISSSSGS), and 431 to 446 (PGTGSFSSSSSSQSSG). The segment covering 454 to 472 (GSKSSSSGHPCMSVSSLTL) has biased composition (polar residues).

It localises to the secreted. In terms of biological role, important for the epidermal barrier integrity. This Macaca mulatta (Rhesus macaque) protein is Corneodesmosin (CDSN).